A 399-amino-acid polypeptide reads, in one-letter code: Chorismate synthase (399 aa).

Positions 40 and 46 each coordinate NADP(+). FMN-binding positions include 135–137 (RAS), 256–257 (QA), Gly-301, 316–320 (KPIAT), and Arg-342.

Belongs to the chorismate synthase family. As to quaternary structure, homotetramer. The cofactor is FMNH2.

The catalysed reaction is 5-O-(1-carboxyvinyl)-3-phosphoshikimate = chorismate + phosphate. The protein operates within metabolic intermediate biosynthesis; chorismate biosynthesis; chorismate from D-erythrose 4-phosphate and phosphoenolpyruvate: step 7/7. Catalyzes the anti-1,4-elimination of the C-3 phosphate and the C-6 proR hydrogen from 5-enolpyruvylshikimate-3-phosphate (EPSP) to yield chorismate, which is the branch point compound that serves as the starting substrate for the three terminal pathways of aromatic amino acid biosynthesis. This reaction introduces a second double bond into the aromatic ring system. The sequence is that of Chorismate synthase from Arthrobacter sp. (strain FB24).